A 326-amino-acid chain; its full sequence is MSEILLFSPQPLFSYTMNKYSRLYTNSNIRNTFFSEIGIGIAANSLLLLFHIFKFIRGQRSRLTDLPIGLLSLIHLLKLLMIAFIATDIFISWRGWDDIICKFLVYLYRSFRGLSLCTTCMLSVLQAITLSPRSSCLAKFKHKSPHHVSCAILSLSVLYMFISSHLLVSLIATPNLTTNVFMYVSESCSILPMSYLMQSMFSTLLAIRDVFLISLMVLSTCYMVALLCRHRKQTRHLQGTSLSPKASPEKKATHSILMLMSFFVLMSILDSIVSCSRTMFLYDPTSYAIQIFVSHIYATVSPFVFMSNEKHIVNFLRSLCKRVINV.

Over 1 to 32 (MSEILLFSPQPLFSYTMNKYSRLYTNSNIRNT) the chain is Extracellular. The helical transmembrane segment at 33 to 53 (FFSEIGIGIAANSLLLLFHIF) threads the bilayer. The Cytoplasmic segment spans residues 54–65 (KFIRGQRSRLTD). A helical membrane pass occupies residues 66-86 (LPIGLLSLIHLLKLLMIAFIA). Over 87–110 (TDIFISWRGWDDIICKFLVYLYRS) the chain is Extracellular. Cys-101 and Cys-188 are oxidised to a cystine. The chain crosses the membrane as a helical span at residues 111–130 (FRGLSLCTTCMLSVLQAITL). The Cytoplasmic portion of the chain corresponds to 131–150 (SPRSSCLAKFKHKSPHHVSC). Residues 151 to 171 (AILSLSVLYMFISSHLLVSLI) traverse the membrane as a helical segment. At 172-203 (ATPNLTTNVFMYVSESCSILPMSYLMQSMFST) the chain is on the extracellular side. Asn-175 carries N-linked (GlcNAc...) asparagine glycosylation. Residues 204-224 (LLAIRDVFLISLMVLSTCYMV) form a helical membrane-spanning segment. The Cytoplasmic portion of the chain corresponds to 225-254 (ALLCRHRKQTRHLQGTSLSPKASPEKKATH). The chain crosses the membrane as a helical span at residues 255–275 (SILMLMSFFVLMSILDSIVSC). The Extracellular portion of the chain corresponds to 276–285 (SRTMFLYDPT). A helical membrane pass occupies residues 286–306 (SYAIQIFVSHIYATVSPFVFM). Over 307 to 326 (SNEKHIVNFLRSLCKRVINV) the chain is Cytoplasmic.

Belongs to the G-protein coupled receptor 1 family.

Its subcellular location is the cell membrane. Putative pheromone receptor implicated in the regulation of social as well as reproductive behavior. The sequence is that of Vomeronasal type-1 receptor 94 (Vom1r94) from Rattus norvegicus (Rat).